Consider the following 206-residue polypeptide: Small ribosomal subunit protein eS8 (206 aa).

The disordered stretch occupies residues 1–37 (MGISRDSRHKRSATGAKRAQFRKKRKFELGRQPANTK).

This sequence belongs to the eukaryotic ribosomal protein eS8 family. Component of the small ribosomal subunit. Mature ribosomes consist of a small (40S) and a large (60S) subunit. The 40S subunit contains about 32 different proteins and 1 molecule of RNA (18S). The 60S subunit contains 45 different proteins and 3 molecules of RNA (25S, 5.8S and 5S).

It is found in the cytoplasm. Component of the ribosome, a large ribonucleoprotein complex responsible for the synthesis of proteins in the cell. The small ribosomal subunit (SSU) binds messenger RNAs (mRNAs) and translates the encoded message by selecting cognate aminoacyl-transfer RNA (tRNA) molecules. The large subunit (LSU) contains the ribosomal catalytic site termed the peptidyl transferase center (PTC), which catalyzes the formation of peptide bonds, thereby polymerizing the amino acids delivered by tRNAs into a polypeptide chain. The nascent polypeptides leave the ribosome through a tunnel in the LSU and interact with protein factors that function in enzymatic processing, targeting, and the membrane insertion of nascent chains at the exit of the ribosomal tunnel. This is Small ribosomal subunit protein eS8 (RPS8A) from Candida albicans (strain SC5314 / ATCC MYA-2876) (Yeast).